Consider the following 326-residue polypeptide: MKDDHDAWEPEELVSDNNSSENELQEDQNSSITFLPPSVNKSNPAKSNYYHSTVTDDISKSQPYRLGVDEAGRGPVLGPMVYAVAYCPVDFDLTNYGFADSKTLASLKREELLKLICNKSNELGKNVGWSTMSISARELAAGMLRYRNKYNLNLQAHDTTIDLIKKVYESGINVTEIYVDTVGPPISYQEKLQAHFPQAKVTVTKKADSLFPIVSLASICAKVTRDIQLECARESIRTENWGSGYSSDARTTEWLKVNVDKIFGWKGDIVRYSWKTAKDLLELPSKSQSSIEIDWHEDDDTPTLNFTQKKKPNPASRSWFGSEFYF.

Residues 1–47 (MKDDHDAWEPEELVSDNNSSENELQEDQNSSITFLPPSVNKSNPAKS) are disordered. A compositionally biased stretch (polar residues) spans 15–47 (SDNNSSENELQEDQNSSITFLPPSVNKSNPAKS). The RNase H type-2 domain maps to 63–286 (PYRLGVDEAG…AKDLLELPSK (224 aa)). Residues aspartate 69, glutamate 70, and aspartate 180 each coordinate a divalent metal cation.

Belongs to the RNase HII family. Eukaryotic subfamily. The cofactor is Mn(2+). Requires Mg(2+) as cofactor.

The enzyme catalyses Endonucleolytic cleavage to 5'-phosphomonoester.. Endonuclease that specifically degrades the RNA of RNA-DNA hybrids. Participates in DNA replication. This chain is Ribonuclease H2 subunit A (rnh201), found in Schizosaccharomyces pombe (strain 972 / ATCC 24843) (Fission yeast).